A 397-amino-acid polypeptide reads, in one-letter code: Elongation factor Tu (397 aa).

The tr-type G domain maps to 10–207; the sequence is KPHVNVGTIG…ACDSYIPDPQ (198 aa). The tract at residues 19 to 26 is G1; sequence GHIDHGKT. 19 to 26 contributes to the GTP binding site; the sequence is GHIDHGKT. Threonine 26 provides a ligand contact to Mg(2+). Residues 60 to 64 are G2; sequence GITIA. The G3 stretch occupies residues 81-84; that stretch reads DCPG. GTP is bound by residues 81–85 and 136–139; these read DCPGH and NKCD. Residues 136–139 form a G4 region; the sequence is NKCD. A G5 region spans residues 174–176; the sequence is SAL.

This sequence belongs to the TRAFAC class translation factor GTPase superfamily. Classic translation factor GTPase family. EF-Tu/EF-1A subfamily. In terms of assembly, monomer.

The protein localises to the cytoplasm. The catalysed reaction is GTP + H2O = GDP + phosphate + H(+). GTP hydrolase that promotes the GTP-dependent binding of aminoacyl-tRNA to the A-site of ribosomes during protein biosynthesis. The sequence is that of Elongation factor Tu from Lawsonia intracellularis (strain PHE/MN1-00).